The primary structure comprises 1374 residues: DNA-directed RNA polymerase subunit beta (1374 aa).

Belongs to the RNA polymerase beta chain family. The RNAP catalytic core consists of 2 alpha, 1 beta, 1 beta' and 1 omega subunit. When a sigma factor is associated with the core the holoenzyme is formed, which can initiate transcription.

The catalysed reaction is RNA(n) + a ribonucleoside 5'-triphosphate = RNA(n+1) + diphosphate. Functionally, DNA-dependent RNA polymerase catalyzes the transcription of DNA into RNA using the four ribonucleoside triphosphates as substrates. The protein is DNA-directed RNA polymerase subunit beta of Methylobacterium nodulans (strain LMG 21967 / CNCM I-2342 / ORS 2060).